Consider the following 227-residue polypeptide: Cytochrome c oxidase subunit 2 (227 aa).

At 1 to 14 (MANHSQLGFQDASS) the chain is on the mitochondrial intermembrane side. A helical transmembrane segment spans residues 15 to 45 (PIMEELVEFHDHALMVALAICSLVLYLLTLM). Over 46–58 (LMEKLSSNTVDAQ) the chain is Mitochondrial matrix. A helical membrane pass occupies residues 59-86 (EVELIWTILPAIVLVLLALPSLQILYMM). At 87-227 (DEIDEPDLTL…FEAWSSLLSS (141 aa)) the chain is on the mitochondrial intermembrane side. The Cu cation site is built by histidine 160, cysteine 195, glutamate 197, cysteine 199, histidine 203, and methionine 206. A Mg(2+)-binding site is contributed by glutamate 197.

The protein belongs to the cytochrome c oxidase subunit 2 family. Component of the cytochrome c oxidase (complex IV, CIV), a multisubunit enzyme composed of 14 subunits. The complex is composed of a catalytic core of 3 subunits MT-CO1, MT-CO2 and MT-CO3, encoded in the mitochondrial DNA, and 11 supernumerary subunits COX4I, COX5A, COX5B, COX6A, COX6B, COX6C, COX7A, COX7B, COX7C, COX8 and NDUFA4, which are encoded in the nuclear genome. The complex exists as a monomer or a dimer and forms supercomplexes (SCs) in the inner mitochondrial membrane with NADH-ubiquinone oxidoreductase (complex I, CI) and ubiquinol-cytochrome c oxidoreductase (cytochrome b-c1 complex, complex III, CIII), resulting in different assemblies (supercomplex SCI(1)III(2)IV(1) and megacomplex MCI(2)III(2)IV(2)). Found in a complex with TMEM177, COA6, COX18, COX20, SCO1 and SCO2. Interacts with TMEM177 in a COX20-dependent manner. Interacts with COX20. Interacts with COX16. Requires Cu cation as cofactor.

Its subcellular location is the mitochondrion inner membrane. It catalyses the reaction 4 Fe(II)-[cytochrome c] + O2 + 8 H(+)(in) = 4 Fe(III)-[cytochrome c] + 2 H2O + 4 H(+)(out). In terms of biological role, component of the cytochrome c oxidase, the last enzyme in the mitochondrial electron transport chain which drives oxidative phosphorylation. The respiratory chain contains 3 multisubunit complexes succinate dehydrogenase (complex II, CII), ubiquinol-cytochrome c oxidoreductase (cytochrome b-c1 complex, complex III, CIII) and cytochrome c oxidase (complex IV, CIV), that cooperate to transfer electrons derived from NADH and succinate to molecular oxygen, creating an electrochemical gradient over the inner membrane that drives transmembrane transport and the ATP synthase. Cytochrome c oxidase is the component of the respiratory chain that catalyzes the reduction of oxygen to water. Electrons originating from reduced cytochrome c in the intermembrane space (IMS) are transferred via the dinuclear copper A center (CU(A)) of subunit 2 and heme A of subunit 1 to the active site in subunit 1, a binuclear center (BNC) formed by heme A3 and copper B (CU(B)). The BNC reduces molecular oxygen to 2 water molecules using 4 electrons from cytochrome c in the IMS and 4 protons from the mitochondrial matrix. The sequence is that of Cytochrome c oxidase subunit 2 (MT-CO2) from Gallus gallus (Chicken).